A 420-amino-acid chain; its full sequence is UDP-N-acetylglucosamine 1-carboxyvinyltransferase (420 aa).

22–23 (KN) is a phosphoenolpyruvate binding site. Position 93 (arginine 93) interacts with UDP-N-acetyl-alpha-D-glucosamine. The active-site Proton donor is the cysteine 117. Residue cysteine 117 is modified to 2-(S-cysteinyl)pyruvic acid O-phosphothioketal. Aspartate 307 and isoleucine 329 together coordinate UDP-N-acetyl-alpha-D-glucosamine.

Belongs to the EPSP synthase family. MurA subfamily.

It is found in the cytoplasm. The catalysed reaction is phosphoenolpyruvate + UDP-N-acetyl-alpha-D-glucosamine = UDP-N-acetyl-3-O-(1-carboxyvinyl)-alpha-D-glucosamine + phosphate. The protein operates within cell wall biogenesis; peptidoglycan biosynthesis. Its function is as follows. Cell wall formation. Adds enolpyruvyl to UDP-N-acetylglucosamine. The polypeptide is UDP-N-acetylglucosamine 1-carboxyvinyltransferase (Shewanella halifaxensis (strain HAW-EB4)).